Consider the following 167-residue polypeptide: uncharacterized protein (167 aa).

The protein belongs to the A.longa ORF167/ORF288 family.

The protein localises to the plastid. This is an uncharacterized protein from Euglena longa (Euglenophycean alga).